Consider the following 193-residue polypeptide: Holliday junction branch migration complex subunit RuvA (193 aa).

A domain I region spans residues 1–64 (MIGRIQGTLV…EDAQQLFGFA (64 aa)). The tract at residues 65–139 (TETEREAFRQ…GKLAPDLGVA (75 aa)) is domain II. A flexible linker region spans residues 139–143 (AGGKP). A domain III region spans residues 144-193 (QAIETSSEVLQALLALGYSEKEALLALKQIPADTSISDGIRMGLKYLSKA).

It belongs to the RuvA family. Homotetramer. Forms an RuvA(8)-RuvB(12)-Holliday junction (HJ) complex. HJ DNA is sandwiched between 2 RuvA tetramers; dsDNA enters through RuvA and exits via RuvB. An RuvB hexamer assembles on each DNA strand where it exits the tetramer. Each RuvB hexamer is contacted by two RuvA subunits (via domain III) on 2 adjacent RuvB subunits; this complex drives branch migration. In the full resolvosome a probable DNA-RuvA(4)-RuvB(12)-RuvC(2) complex forms which resolves the HJ.

It localises to the cytoplasm. Its function is as follows. The RuvA-RuvB-RuvC complex processes Holliday junction (HJ) DNA during genetic recombination and DNA repair, while the RuvA-RuvB complex plays an important role in the rescue of blocked DNA replication forks via replication fork reversal (RFR). RuvA specifically binds to HJ cruciform DNA, conferring on it an open structure. The RuvB hexamer acts as an ATP-dependent pump, pulling dsDNA into and through the RuvAB complex. HJ branch migration allows RuvC to scan DNA until it finds its consensus sequence, where it cleaves and resolves the cruciform DNA. The sequence is that of Holliday junction branch migration complex subunit RuvA from Polynucleobacter necessarius subsp. necessarius (strain STIR1).